The chain runs to 242 residues: Small ribosomal subunit protein uS5 (242 aa).

A compositionally biased stretch (polar residues) spans 1–14 (MADENSTGPGNQPE). The tract at residues 1 to 65 (MADENSTGPG…DRRPRDEDGG (65 aa)) is disordered. Basic and acidic residues predominate over residues 41-65 (DGGRGGRDGGRGRRDDRRPRDEDGG). Residues 68–131 (LIEKLVHINR…AAAKKAMIRV (64 aa)) form the S5 DRBM domain. A disordered region spans residues 204–242 (EQTSPKSVAQRRGKKVSDLIKRGGASDRAAEAEAAAVTE). Residues 218–234 (KVSDLIKRGGASDRAAE) show a composition bias toward basic and acidic residues.

This sequence belongs to the universal ribosomal protein uS5 family. Part of the 30S ribosomal subunit. Contacts proteins S4 and S8.

Its function is as follows. With S4 and S12 plays an important role in translational accuracy. Functionally, located at the back of the 30S subunit body where it stabilizes the conformation of the head with respect to the body. This is Small ribosomal subunit protein uS5 from Sphingopyxis alaskensis (strain DSM 13593 / LMG 18877 / RB2256) (Sphingomonas alaskensis).